Here is a 190-residue protein sequence, read N- to C-terminus: NADH dehydrogenase [ubiquinone] iron-sulfur protein 3 (190 aa).

The protein belongs to the complex I 30 kDa subunit family. As to quaternary structure, complex I is composed of about 45 different subunits. This is a component of the iron-sulfur (IP) fragment of the enzyme.

The protein localises to the mitochondrion inner membrane. The catalysed reaction is a ubiquinone + NADH + 5 H(+)(in) = a ubiquinol + NAD(+) + 4 H(+)(out). In terms of biological role, core subunit of the mitochondrial membrane respiratory chain NADH dehydrogenase (Complex I) that is believed to belong to the minimal assembly required for catalysis. Complex I functions in the transfer of electrons from NADH to the respiratory chain. The immediate electron acceptor for the enzyme is believed to be ubiquinone. This Oryza sativa subsp. japonica (Rice) protein is NADH dehydrogenase [ubiquinone] iron-sulfur protein 3 (NAD9).